A 294-amino-acid polypeptide reads, in one-letter code: MSIKDQIFLASQHLAPHHLVSRGMGLLADSRIPALKNAMISRFVQRYNVDMSEALVEDPLAYPCFNDFFTRALKPDARPLDDDSANVLSPADGTISQLGPIREGRIFQAKGHSFGLTALLGGDAERAAPFEGGDFATIYLSPRDYHRVHMPVTGTLREMVHVPGRLFSVNPLTANTVPDLFARNERVVCIFDTAYGPMAVILVGAMIVASVETVWAGLVTPHKREVRSTRYGPQEPIVLERGAEMGRFKLGSTAIVLFGPGRIRWFDTPSVRGPIRMGETLALPANHLEDVPAV.

Catalysis depends on charge relay system; for autoendoproteolytic cleavage activity residues D92, H149, and S252. S252 (schiff-base intermediate with substrate; via pyruvic acid; for decarboxylase activity) is an active-site residue. S252 is subject to Pyruvic acid (Ser); by autocatalysis.

The protein belongs to the phosphatidylserine decarboxylase family. PSD-B subfamily. Prokaryotic type I sub-subfamily. As to quaternary structure, heterodimer of a large membrane-associated beta subunit and a small pyruvoyl-containing alpha subunit. Pyruvate serves as cofactor. Is synthesized initially as an inactive proenzyme. Formation of the active enzyme involves a self-maturation process in which the active site pyruvoyl group is generated from an internal serine residue via an autocatalytic post-translational modification. Two non-identical subunits are generated from the proenzyme in this reaction, and the pyruvate is formed at the N-terminus of the alpha chain, which is derived from the carboxyl end of the proenzyme. The autoendoproteolytic cleavage occurs by a canonical serine protease mechanism, in which the side chain hydroxyl group of the serine supplies its oxygen atom to form the C-terminus of the beta chain, while the remainder of the serine residue undergoes an oxidative deamination to produce ammonia and the pyruvoyl prosthetic group on the alpha chain. During this reaction, the Ser that is part of the protease active site of the proenzyme becomes the pyruvoyl prosthetic group, which constitutes an essential element of the active site of the mature decarboxylase.

It localises to the cell membrane. The enzyme catalyses a 1,2-diacyl-sn-glycero-3-phospho-L-serine + H(+) = a 1,2-diacyl-sn-glycero-3-phosphoethanolamine + CO2. It participates in phospholipid metabolism; phosphatidylethanolamine biosynthesis; phosphatidylethanolamine from CDP-diacylglycerol: step 2/2. Catalyzes the formation of phosphatidylethanolamine (PtdEtn) from phosphatidylserine (PtdSer). The protein is Phosphatidylserine decarboxylase proenzyme of Bordetella avium (strain 197N).